We begin with the raw amino-acid sequence, 863 residues long: Alanine--tRNA ligase (863 aa).

The Zn(2+) site is built by His552, His556, Cys654, and His658.

The protein belongs to the class-II aminoacyl-tRNA synthetase family. Zn(2+) serves as cofactor.

The protein localises to the cytoplasm. It catalyses the reaction tRNA(Ala) + L-alanine + ATP = L-alanyl-tRNA(Ala) + AMP + diphosphate. In terms of biological role, catalyzes the attachment of alanine to tRNA(Ala) in a two-step reaction: alanine is first activated by ATP to form Ala-AMP and then transferred to the acceptor end of tRNA(Ala). Also edits incorrectly charged Ser-tRNA(Ala) and Gly-tRNA(Ala) via its editing domain. The protein is Alanine--tRNA ligase of Halorhodospira halophila (strain DSM 244 / SL1) (Ectothiorhodospira halophila (strain DSM 244 / SL1)).